A 118-amino-acid chain; its full sequence is DNA-directed RNA polymerase subunit omega (118 aa).

Positions 78-104 are disordered; the sequence is DEPEEDSMAMLMGGGQPDKPAEDDMSE.

It belongs to the RNA polymerase subunit omega family. As to quaternary structure, the RNAP catalytic core consists of 2 alpha, 1 beta, 1 beta' and 1 omega subunit. When a sigma factor is associated with the core the holoenzyme is formed, which can initiate transcription.

It carries out the reaction RNA(n) + a ribonucleoside 5'-triphosphate = RNA(n+1) + diphosphate. Functionally, promotes RNA polymerase assembly. Latches the N- and C-terminal regions of the beta' subunit thereby facilitating its interaction with the beta and alpha subunits. This chain is DNA-directed RNA polymerase subunit omega, found in Dinoroseobacter shibae (strain DSM 16493 / NCIMB 14021 / DFL 12).